Consider the following 638-residue polypeptide: MSSCQPPPFLSSMVVRWLSVWIILASSAFASAKCAADYYVRSLPGQPEGPLLKMHAGHIEVDHENNGNLFFWHFQNRHIANRQRTVIWLNGGPGCSSMDGAMMEVGPYRLKDDHTLKYNEGSWDEFANLLFVDQPVGTGYSYANTNSYLHELDEMAAHFVTFMERWFELFPEYEHDDLYFAGESYAGQYIPYIAKAILDRNKNETVIAQRRLWHLKGLLIGNGWFSPVEQYLSYLPYVYKEGMVKNDSDEAKGIERAHSDCVAELDRAKGDVKIHVDVCEKILSAILDVSNKSGHCVNMYDVRLTDTFPSCGMNWPPDLKHLAPYLRRDDVTSALHINKDKKTGWTECAGAVSSSFRPRKSKPSADLLPGLLESGVRIGLFSGAKDLICNHIGTEEFINKMEWSGGKGFELSPGVWAPRRDWTFEGETAGYYQEARNLTYVLFYNASHMVPFDYARRSRDMLDRFLGVDITSIGGNPTDSRIDGEKGALTSVGNHPNSTLAEQREKEKLKAATWKAYYKSGEVALVVVVIAAGAWGFFLWRSRRQRQGSGYLGIYPSLNGLSSGSLPRYRNKRSSRDIEAAAEFEASELETLHDMDDRSPGPSRDNYSVGEDSETEDEKRYPPTDFDRQDGTPSASRT.

A signal peptide spans 1–32; the sequence is MSSCQPPPFLSSMVVRWLSVWIILASSAFASA. Residues 33–519 are Lumenal-facing; that stretch reads KCAADYYVRS…KAATWKAYYK (487 aa). Ser184 is a catalytic residue. Residues Asn203, Asn246, and Asn291 are each glycosylated (N-linked (GlcNAc...) asparagine). Asp386 is an active-site residue. 2 N-linked (GlcNAc...) asparagine glycosylation sites follow: Asn437 and Asn445. His448 is a catalytic residue. Asn497 carries N-linked (GlcNAc...) asparagine glycosylation. The helical transmembrane segment at 520–540 threads the bilayer; sequence SGEVALVVVVIAAGAWGFFLW. The Cytoplasmic portion of the chain corresponds to 541 to 638; it reads RSRRQRQGSG…QDGTPSASRT (98 aa). Positions 586-638 are disordered; that stretch reads ASELETLHDMDDRSPGPSRDNYSVGEDSETEDEKRYPPTDFDRQDGTPSASRT. Composition is skewed to basic and acidic residues over residues 590–599 and 617–630; these read ETLHDMDDRS and DEKR…DRQD.

The protein belongs to the peptidase S10 family.

It is found in the golgi apparatus. It localises to the trans-Golgi network membrane. It catalyses the reaction Preferential release of a C-terminal arginine or lysine residue.. Its function is as follows. Protease with a carboxypeptidase B-like function involved in the C-terminal processing of the lysine and arginine residues from protein precursors. Promotes cell fusion and is involved in the programmed cell death. The protein is Pheromone-processing carboxypeptidase KEX1 (KEX1) of Uncinocarpus reesii (strain UAMH 1704).